The following is a 155-amino-acid chain: Late embryogenesis abundant protein 2 (155 aa).

Residues Met1–His155 form a disordered region. 2 stretches are compositionally biased toward basic and acidic residues: residues Gly11–Thr21 and Ile28–Ala39. A compositionally biased stretch (low complexity) spans Gln40–Ala78. A run of 2 repeats spans residues Thr53–Gln63 and Thr64–Gln74. The tract at residues Thr53–Gln74 is 2 X 11 AA approximate tandem repeats of T-A-Q-A-A-K-E-K-T-Q-Q. Residues Thr79–Ser95 are compositionally biased toward basic and acidic residues. The segment covering Met97–Gly120 has biased composition (polar residues). Positions Asp144–His155 are enriched in basic and acidic residues.

Belongs to the LEA type 4 family. As to expression, highest expression is found in seeds. No expression detected in adult tissues.

In Cicer arietinum (Chickpea), this protein is Late embryogenesis abundant protein 2.